We begin with the raw amino-acid sequence, 376 residues long: Secreted LysM effector LysM9 (376 aa).

The signal sequence occupies residues 1–25 (MGHFHLSNFIALIGILLVGPTATSG). A LysM domain is found at 41–89 (SKYVVQAGETCSAIAQAHSITTADIETYNAQSWAWTGCGQISQGDFICL). A disordered region spans residues 190-219 (SSETSSSMTTSTSATTSVPTTTSTTTTTKT).

This sequence belongs to the secreted LysM effector family.

The protein localises to the secreted. Its function is as follows. Secreted LysM effector that might have a role in sequestration of chitin oligosaccharides (breakdown products of fungal cell walls that are released during invasion and act as triggers of host immunity) to dampen host defense. The protein is Secreted LysM effector LysM9 of Penicillium expansum (Blue mold rot fungus).